Here is a 129-residue protein sequence, read N- to C-terminus: Large-conductance mechanosensitive channel (129 aa).

Helical transmembrane passes span 10–30 (FAVK…GAFG) and 70–90 (AVML…VIAI).

The protein belongs to the MscL family. Homopentamer.

The protein resides in the cell inner membrane. In terms of biological role, channel that opens in response to stretch forces in the membrane lipid bilayer. May participate in the regulation of osmotic pressure changes within the cell. This chain is Large-conductance mechanosensitive channel, found in Actinobacillus pleuropneumoniae serotype 3 (strain JL03).